A 902-amino-acid chain; its full sequence is Glutamate receptor 4 (902 aa).

The first 20 residues, 1–20 (MRIICRQIVLLFSGFWGLAM), serve as a signal peptide directing secretion. Residues 22–544 (AFPSSVQIGG…GVFSFLDPLA (523 aa)) lie on the Extracellular side of the membrane. Asn-52, Asn-56, Asn-258, Asn-371, Asn-407, and Asn-414 each carry an N-linked (GlcNAc...) asparagine glycan. A disulfide bridge connects residues Cys-84 and Cys-331. L-glutamate contacts are provided by Pro-500, Thr-502, and Arg-507. The helical transmembrane segment at 545–565 (YEIWMCIVFAYIGVSVVLFLV) threads the bilayer. Residues 566 to 592 (SRFSPYEWHTEEPEDGKEGPSDQPPNE) lie on the Cytoplasmic side of the membrane. Positions 593–608 (FGIFNSLWFSLGAFMQ) form an intramembrane region, helical; Pore-forming. The stretch at 609–611 (QGC) is an intramembrane region. Cys-611 carries S-palmitoyl cysteine lipidation. The Cytoplasmic segment spans residues 612–617 (DISPRS). The chain crosses the membrane as a helical span at residues 618–638 (LSGRIVGGVWWFFTLIIISSY). At 639 to 813 (TANLAAFLTV…DKTSALSLSN (175 aa)) the chain is on the extracellular side. Ser-676, Thr-677, and Glu-727 together coordinate L-glutamate. Cys-740 and Cys-795 form a disulfide bridge. A helical membrane pass occupies residues 814–834 (VAGVFYILVGGLGLAMLVALI). The Cytoplasmic segment spans residues 835–902 (EFCYKSRAEA…GLAVIASDLP (68 aa)). The S-palmitoyl cysteine moiety is linked to residue Cys-837. Ser-862 bears the Phosphoserine mark.

The protein belongs to the glutamate-gated ion channel (TC 1.A.10.1) family. GRIA4 subfamily. As to quaternary structure, homotetramer or heterotetramer of pore-forming glutamate receptor subunits. Tetramers may be formed by the dimerization of dimers. Interacts with EPB41L1 via its C-terminus. Isoform 3 interacts with PICK1. Found in a complex with GRIA1, GRIA2, GRIA3, CNIH2, CNIH3, CACNG2, CACNG3, CACNG4, CACNG5, CACNG7 and CACNG8. Interacts with CACNG5 and PRKCG. Found in a complex with GRIA1, GRIA2, GRIA3, DLG4, CACNG8 and CNIH2. In terms of processing, palmitoylated. Depalmitoylated upon L-glutamate stimulation. ZDHHC3/GODZ specifically palmitoylates Cys-611, which leads to Golgi retention and decreased cell surface expression. In contrast, Cys-837 palmitoylation does not affect cell surface expression but regulates stimulation-dependent endocytosis. Phosphorylated at Ser-862 by PRKCG; phosphorylation increases plasma membrane-associated GRI4 expression.

The protein resides in the cell membrane. It is found in the postsynaptic cell membrane. The protein localises to the cell projection. It localises to the dendrite. It catalyses the reaction Ca(2+)(in) = Ca(2+)(out). The catalysed reaction is Na(+)(in) = Na(+)(out). The enzyme catalyses Mg(2+)(in) = Mg(2+)(out). In terms of biological role, ionotropic glutamate receptor that functions as a ligand-gated cation channel, gated by L-glutamate and glutamatergic agonists such as alpha-amino-3-hydroxy-5-methyl-4-isoxazolepropionic acid (AMPA), quisqualic acid, and kainic acid. L-glutamate acts as an excitatory neurotransmitter at many synapses in the central nervous system and plays an important role in fast excitatory synaptic transmission. Binding of the excitatory neurotransmitter L-glutamate induces a conformation change, leading to the opening of the cation channel, and thereby converts the chemical signal to an electrical impulse upon entry of monovalent and divalent cations such as sodium and calcium. The receptor then desensitizes rapidly and enters a transient inactive state, characterized by the presence of bound agonist. In the presence of CACNG8, shows resensitization which is characterized by a delayed accumulation of current flux upon continued application of L-glutamate. This Mus musculus (Mouse) protein is Glutamate receptor 4.